We begin with the raw amino-acid sequence, 398 residues long: G2/mitotic-specific cyclin-B2 (398 aa).

Disordered stretches follow at residues 1–26 (MALLRRPTVSTDLENNDTGVNSKPKS) and 53–76 (AQNTKVPVPPTKTTNVNKHPKPTA). Thr-8 is subject to Phosphothreonine. Over residues 8-23 (TVSTDLENNDTGVNSK) the composition is skewed to polar residues. Residues 55-69 (NTKVPVPPTKTTNVN) show a composition bias toward low complexity. Ser-77 and Ser-92 each carry phosphoserine. Residue Thr-94 is modified to Phosphothreonine. Residues Ser-99, Ser-392, and Ser-398 each carry the phosphoserine modification.

It belongs to the cyclin family. Cyclin AB subfamily. As to quaternary structure, interacts with the CDK1 protein kinase to form a serine/threonine kinase holoenzyme complex also known as maturation promoting factor (MPF). The cyclin subunit imparts substrate specificity to the complex.

In terms of biological role, essential for the control of the cell cycle at the G2/M (mitosis) transition. The protein is G2/mitotic-specific cyclin-B2 (CCNB2) of Bos taurus (Bovine).